The following is a 533-amino-acid chain: Glucose-6-phosphate isomerase (533 aa).

The Proton donor role is filled by glutamate 330. Catalysis depends on residues histidine 359 and lysine 461.

Belongs to the GPI family.

The protein localises to the cytoplasm. The enzyme catalyses alpha-D-glucose 6-phosphate = beta-D-fructose 6-phosphate. It functions in the pathway carbohydrate biosynthesis; gluconeogenesis. The protein operates within carbohydrate degradation; glycolysis; D-glyceraldehyde 3-phosphate and glycerone phosphate from D-glucose: step 2/4. In terms of biological role, catalyzes the reversible isomerization of glucose-6-phosphate to fructose-6-phosphate. The chain is Glucose-6-phosphate isomerase from Prochlorococcus marinus (strain SARG / CCMP1375 / SS120).